The primary structure comprises 192 residues: Segregation and condensation protein B (192 aa).

This sequence belongs to the ScpB family. Homodimer. Homodimerization may be required to stabilize the binding of ScpA to the Smc head domains. Component of a cohesin-like complex composed of ScpA, ScpB and the Smc homodimer, in which ScpA and ScpB bind to the head domain of Smc. The presence of the three proteins is required for the association of the complex with DNA.

The protein resides in the cytoplasm. Its function is as follows. Participates in chromosomal partition during cell division. May act via the formation of a condensin-like complex containing Smc and ScpA that pull DNA away from mid-cell into both cell halves. This Mycoplasma mobile (strain ATCC 43663 / 163K / NCTC 11711) (Mesomycoplasma mobile) protein is Segregation and condensation protein B.